The following is a 184-amino-acid chain: Urease accessory protein UreE (184 aa).

The tract at residues 147–184 (EHHGHSHSHSHSHDHDHDHDHDHQHGPSCSHGHHHGHR) is disordered. Residues 157-171 (HSHDHDHDHDHDHQH) show a composition bias toward basic and acidic residues.

This sequence belongs to the UreE family.

Its subcellular location is the cytoplasm. Functionally, involved in urease metallocenter assembly. Binds nickel. Probably functions as a nickel donor during metallocenter assembly. The chain is Urease accessory protein UreE from Burkholderia mallei (strain ATCC 23344).